The sequence spans 253 residues: Uridylate kinase (253 aa).

Residue 26–29 (KLSG) coordinates ATP. UMP is bound at residue Gly68. Residues Gly69 and Arg73 each coordinate ATP. Residues Asp88 and 149-156 (TGNPFFTT) contribute to the UMP site. Positions 176, 182, and 185 each coordinate ATP.

It belongs to the UMP kinase family. Homohexamer.

The protein localises to the cytoplasm. The catalysed reaction is UMP + ATP = UDP + ADP. It functions in the pathway pyrimidine metabolism; CTP biosynthesis via de novo pathway; UDP from UMP (UMPK route): step 1/1. Inhibited by UTP. Its function is as follows. Catalyzes the reversible phosphorylation of UMP to UDP. The sequence is that of Uridylate kinase from Chromohalobacter salexigens (strain ATCC BAA-138 / DSM 3043 / CIP 106854 / NCIMB 13768 / 1H11).